Consider the following 302-residue polypeptide: uncharacterized protein (302 aa).

Transmembrane regions (helical) follow at residues S25 to F45, F58 to L78, I104 to L124, Y158 to L178, F182 to P202, A215 to L235, and M247 to L267. In terms of domain architecture, PQ-loop spans A175–T245.

The protein resides in the membrane. This is an uncharacterized protein from Schizosaccharomyces pombe (strain 972 / ATCC 24843) (Fission yeast).